The sequence spans 55 residues: uncharacterized protein (55 aa).

This is an uncharacterized protein from Tibrogargan virus (strain CS132) (TIBV).